The chain runs to 365 residues: Delta(7)-sterol 5(6)-desaturase ERG3 (365 aa).

Topologically, residues 1 to 92 are cytoplasmic; it reads MDLVLEVADH…LLPRSSILRE (92 aa). The helical transmembrane segment at 93–113 threads the bilayer; the sequence is FLSLWVIVTIFGLLLYLFTAS. Residues 114–140 lie on the Lumenal side of the membrane; the sequence is LSYVFVFDKSIFNHPRYLKNQMAMEIK. Residues 141–161 form a helical membrane-spanning segment; that stretch reads LAVSAIPWMSMLTVPWFVMEL. Topologically, residues 162-242 are cytoplasmic; that stretch reads NGHSKLYMKI…VDGFLQSISY (81 aa). In terms of domain architecture, Fatty acid hydroxylase spans 187–311; that stretch reads TFIFFTDCGV…FTTLWDRLGG (125 aa). The Histidine box-1 signature appears at 200–204; sequence HRWLH. The Histidine box-2 motif lies at 213-217; it reads HKPHH. Residues 243-263 form a helical membrane-spanning segment; the sequence is HIYPLILPLHKVSYLILFTFV. Residues 264-365 lie on the Lumenal side of the membrane; the sequence is NFWTVMIHDG…ENDPNTKKNN (102 aa). Positions 288-292 match the Histidine box-3 motif; the sequence is HTVHH. Residues Lys324 and Lys344 each participate in a glycyl lysine isopeptide (Lys-Gly) (interchain with G-Cter in ubiquitin) cross-link.

It belongs to the sterol desaturase family. In terms of assembly, interacts with ERG28. Fe cation serves as cofactor.

Its subcellular location is the endoplasmic reticulum membrane. The catalysed reaction is episterol + 2 Fe(II)-[cytochrome b5] + O2 + 2 H(+) = 5-dehydroepisterol + 2 Fe(III)-[cytochrome b5] + 2 H2O. Its pathway is steroid metabolism; ergosterol biosynthesis; ergosterol from zymosterol: step 3/5. Functionally, C-5 sterol desaturase; part of the third module of ergosterol biosynthesis pathway that includes the late steps of the pathway. ERG3 catalyzes the introduction of a C-5 double bond in the B ring to produce 5-dehydroepisterol. The third module or late pathway involves the ergosterol synthesis itself through consecutive reactions that mainly occur in the endoplasmic reticulum (ER) membrane. Firstly, the squalene synthase ERG9 catalyzes the condensation of 2 farnesyl pyrophosphate moieties to form squalene, which is the precursor of all steroids. Squalene synthase is crucial for balancing the incorporation of farnesyl diphosphate (FPP) into sterol and nonsterol isoprene synthesis. Secondly, the squalene epoxidase ERG1 catalyzes the stereospecific oxidation of squalene to (S)-2,3-epoxysqualene, which is considered to be a rate-limiting enzyme in steroid biosynthesis. Then, the lanosterol synthase ERG7 catalyzes the cyclization of (S)-2,3 oxidosqualene to lanosterol, a reaction that forms the sterol core. In the next steps, lanosterol is transformed to zymosterol through a complex process involving various demethylation, reduction and desaturation reactions. The lanosterol 14-alpha-demethylase ERG11 (also known as CYP51) catalyzes C14-demethylation of lanosterol to produce 4,4'-dimethyl cholesta-8,14,24-triene-3-beta-ol, which is critical for ergosterol biosynthesis. The C-14 reductase ERG24 reduces the C14=C15 double bond of 4,4-dimethyl-cholesta-8,14,24-trienol to produce 4,4-dimethyl-cholesta-8,24-dienol. 4,4-dimethyl-cholesta-8,24-dienol is substrate of the C-4 demethylation complex ERG25-ERG26-ERG27 in which ERG25 catalyzes the three-step monooxygenation required for the demethylation of 4,4-dimethyl and 4alpha-methylsterols, ERG26 catalyzes the oxidative decarboxylation that results in a reduction of the 3-beta-hydroxy group at the C-3 carbon to an oxo group, and ERG27 is responsible for the reduction of the keto group on the C-3. ERG28 has a role as a scaffold to help anchor ERG25, ERG26 and ERG27 to the endoplasmic reticulum and ERG29 regulates the activity of the iron-containing C4-methylsterol oxidase ERG25. Then, the sterol 24-C-methyltransferase ERG6 catalyzes the methyl transfer from S-adenosyl-methionine to the C-24 of zymosterol to form fecosterol. The C-8 sterol isomerase ERG2 catalyzes the reaction which results in unsaturation at C-7 in the B ring of sterols and thus converts fecosterol to episterol. The sterol-C5-desaturase ERG3 then catalyzes the introduction of a C-5 double bond in the B ring to produce 5-dehydroepisterol. The C-22 sterol desaturase ERG5 further converts 5-dehydroepisterol into ergosta-5,7,22,24(28)-tetraen-3beta-ol by forming the C-22(23) double bond in the sterol side chain. Finally, ergosta-5,7,22,24(28)-tetraen-3beta-ol is substrate of the C-24(28) sterol reductase ERG4 to produce ergosterol. This chain is Delta(7)-sterol 5(6)-desaturase ERG3, found in Saccharomyces cerevisiae (strain ATCC 204508 / S288c) (Baker's yeast).